A 604-amino-acid polypeptide reads, in one-letter code: Glutamine--fructose-6-phosphate aminotransferase [isomerizing] (604 aa).

Cys2 functions as the Nucleophile; for GATase activity in the catalytic mechanism. Residues 2–219 form the Glutamine amidotransferase type-2 domain; it reads CGIMGAVSER…EGDSACVTTQ (218 aa). SIS domains are found at residues 279–427 and 454–594; these read LRAS…DNRA and LASL…VDQP. Lys599 (for Fru-6P isomerization activity) is an active-site residue.

Homodimer.

Its subcellular location is the cytoplasm. It carries out the reaction D-fructose 6-phosphate + L-glutamine = D-glucosamine 6-phosphate + L-glutamate. In terms of biological role, catalyzes the first step in hexosamine metabolism, converting fructose-6P into glucosamine-6P using glutamine as a nitrogen source. This is Glutamine--fructose-6-phosphate aminotransferase [isomerizing] from Legionella pneumophila (strain Lens).